Reading from the N-terminus, the 157-residue chain is SsrA-binding protein (157 aa).

The protein belongs to the SmpB family.

It localises to the cytoplasm. In terms of biological role, required for rescue of stalled ribosomes mediated by trans-translation. Binds to transfer-messenger RNA (tmRNA), required for stable association of tmRNA with ribosomes. tmRNA and SmpB together mimic tRNA shape, replacing the anticodon stem-loop with SmpB. tmRNA is encoded by the ssrA gene; the 2 termini fold to resemble tRNA(Ala) and it encodes a 'tag peptide', a short internal open reading frame. During trans-translation Ala-aminoacylated tmRNA acts like a tRNA, entering the A-site of stalled ribosomes, displacing the stalled mRNA. The ribosome then switches to translate the ORF on the tmRNA; the nascent peptide is terminated with the 'tag peptide' encoded by the tmRNA and targeted for degradation. The ribosome is freed to recommence translation, which seems to be the essential function of trans-translation. The chain is SsrA-binding protein from Lacticaseibacillus paracasei (strain ATCC 334 / BCRC 17002 / CCUG 31169 / CIP 107868 / KCTC 3260 / NRRL B-441) (Lactobacillus paracasei).